Here is a 458-residue protein sequence, read N- to C-terminus: A-type ATP synthase subunit B (458 aa).

It belongs to the ATPase alpha/beta chains family. Has multiple subunits with at least A(3), B(3), C, D, E, F, H, I and proteolipid K(x).

The protein resides in the cell membrane. Component of the A-type ATP synthase that produces ATP from ADP in the presence of a proton gradient across the membrane. The B chain is a regulatory subunit. The protein is A-type ATP synthase subunit B of Methanocorpusculum labreanum (strain ATCC 43576 / DSM 4855 / Z).